The sequence spans 504 residues: Pyruvate kinase (504 aa).

Position 53 (arginine 53) interacts with substrate. The K(+) site is built by asparagine 55, serine 57, aspartate 88, and threonine 89. ATP is bound at residue 55-58 (NFSH). Arginine 95 and lysine 181 together coordinate ATP. Position 246 (glutamate 246) interacts with Mg(2+). Glycine 269, aspartate 270, and threonine 302 together coordinate substrate. Aspartate 270 provides a ligand contact to Mg(2+).

The protein belongs to the pyruvate kinase family. As to quaternary structure, homotetramer. Requires Mg(2+) as cofactor. K(+) is required as a cofactor.

It carries out the reaction pyruvate + ATP = phosphoenolpyruvate + ADP + H(+). The protein operates within carbohydrate degradation; glycolysis; pyruvate from D-glyceraldehyde 3-phosphate: step 5/5. The sequence is that of Pyruvate kinase (PYK1) from Debaryomyces hansenii (strain ATCC 36239 / CBS 767 / BCRC 21394 / JCM 1990 / NBRC 0083 / IGC 2968) (Yeast).